The sequence spans 292 residues: Undecaprenyl-diphosphatase 2 (292 aa).

5 helical membrane passes run 89–109, 118–138, 203–223, 232–252, and 263–283; these read WLVI…QDAI, LIAT…WYAS, FLLA…SIGG, PTIL…AWFL, and FVLY…GGAL.

The protein belongs to the UppP family.

The protein localises to the cell membrane. It catalyses the reaction di-trans,octa-cis-undecaprenyl diphosphate + H2O = di-trans,octa-cis-undecaprenyl phosphate + phosphate + H(+). In terms of biological role, catalyzes the dephosphorylation of undecaprenyl diphosphate (UPP). Confers resistance to bacitracin. This chain is Undecaprenyl-diphosphatase 2, found in Frankia casuarinae (strain DSM 45818 / CECT 9043 / HFP020203 / CcI3).